Consider the following 332-residue polypeptide: Hdr-like menaquinol oxidoreductase cytochrome b-like subunit (332 aa).

Transmembrane regions (helical) follow at residues 3 to 23 (GVIF…IGVI), 97 to 117 (DARW…LVLI), 143 to 163 (VFIP…FLLW), 177 to 197 (LPSD…GNVM), and 230 to 250 (IEPI…YFPF).

Consists of five subunits: an integral membrane subunit, a cytochrome b-like subunit, a cytochrome c subunit and two iron-sulfur subunits.

It localises to the cell membrane. Functionally, has menaquinol-oxidizing activity. HmeC and HmeD subunits may together mediate electron transfer from menaquinol to an unidentified electron acceptor on the cytoplasmic side of the membrane. The polypeptide is Hdr-like menaquinol oxidoreductase cytochrome b-like subunit (hmeC) (Archaeoglobus fulgidus (strain ATCC 49558 / DSM 4304 / JCM 9628 / NBRC 100126 / VC-16)).